Reading from the N-terminus, the 337-residue chain is Fructose-1,6-bisphosphatase class 1 (337 aa).

Glu94, Asp116, Leu118, and Asp119 together coordinate Mg(2+). Residues 119–122, Asn210, and Lys276 contribute to the substrate site; that span reads DGSS. Residue Glu282 participates in Mg(2+) binding.

The protein belongs to the FBPase class 1 family. In terms of assembly, homotetramer. Mg(2+) is required as a cofactor.

The protein resides in the cytoplasm. The catalysed reaction is beta-D-fructose 1,6-bisphosphate + H2O = beta-D-fructose 6-phosphate + phosphate. Its pathway is carbohydrate biosynthesis; gluconeogenesis. In Burkholderia cenocepacia (strain HI2424), this protein is Fructose-1,6-bisphosphatase class 1.